We begin with the raw amino-acid sequence, 151 residues long: SsrA-binding protein (151 aa).

The protein belongs to the SmpB family.

The protein localises to the cytoplasm. Its function is as follows. Required for rescue of stalled ribosomes mediated by trans-translation. Binds to transfer-messenger RNA (tmRNA), required for stable association of tmRNA with ribosomes. tmRNA and SmpB together mimic tRNA shape, replacing the anticodon stem-loop with SmpB. tmRNA is encoded by the ssrA gene; the 2 termini fold to resemble tRNA(Ala) and it encodes a 'tag peptide', a short internal open reading frame. During trans-translation Ala-aminoacylated tmRNA acts like a tRNA, entering the A-site of stalled ribosomes, displacing the stalled mRNA. The ribosome then switches to translate the ORF on the tmRNA; the nascent peptide is terminated with the 'tag peptide' encoded by the tmRNA and targeted for degradation. The ribosome is freed to recommence translation, which seems to be the essential function of trans-translation. This chain is SsrA-binding protein, found in Wolinella succinogenes (strain ATCC 29543 / DSM 1740 / CCUG 13145 / JCM 31913 / LMG 7466 / NCTC 11488 / FDC 602W) (Vibrio succinogenes).